We begin with the raw amino-acid sequence, 162 residues long: 2-C-methyl-D-erythritol 2,4-cyclodiphosphate synthase (162 aa).

Residues Asp8 and His10 each contribute to the a divalent metal cation site. Residues Asp8–His10 and His34–Ser35 each bind 4-CDP-2-C-methyl-D-erythritol 2-phosphate. Residue His42 coordinates a divalent metal cation. 4-CDP-2-C-methyl-D-erythritol 2-phosphate contacts are provided by residues Asp56–Gly58, Phe61–Asp65, Thr132–Glu135, Phe139, and Lys142.

It belongs to the IspF family. In terms of assembly, homotrimer. The cofactor is a divalent metal cation.

It catalyses the reaction 4-CDP-2-C-methyl-D-erythritol 2-phosphate = 2-C-methyl-D-erythritol 2,4-cyclic diphosphate + CMP. The protein operates within isoprenoid biosynthesis; isopentenyl diphosphate biosynthesis via DXP pathway; isopentenyl diphosphate from 1-deoxy-D-xylulose 5-phosphate: step 4/6. In terms of biological role, involved in the biosynthesis of isopentenyl diphosphate (IPP) and dimethylallyl diphosphate (DMAPP), two major building blocks of isoprenoid compounds. Catalyzes the conversion of 4-diphosphocytidyl-2-C-methyl-D-erythritol 2-phosphate (CDP-ME2P) to 2-C-methyl-D-erythritol 2,4-cyclodiphosphate (ME-CPP) with a corresponding release of cytidine 5-monophosphate (CMP). The polypeptide is 2-C-methyl-D-erythritol 2,4-cyclodiphosphate synthase (Pelotomaculum thermopropionicum (strain DSM 13744 / JCM 10971 / SI)).